Consider the following 179-residue polypeptide: ATP-dependent protease subunit HslV (179 aa).

Threonine 6 is an active-site residue. Na(+) contacts are provided by serine 162, cysteine 165, and threonine 168.

The protein belongs to the peptidase T1B family. HslV subfamily. In terms of assembly, a double ring-shaped homohexamer of HslV is capped on each side by a ring-shaped HslU homohexamer. The assembly of the HslU/HslV complex is dependent on binding of ATP.

Its subcellular location is the cytoplasm. It catalyses the reaction ATP-dependent cleavage of peptide bonds with broad specificity.. Allosterically activated by HslU binding. Its function is as follows. Protease subunit of a proteasome-like degradation complex believed to be a general protein degrading machinery. The sequence is that of ATP-dependent protease subunit HslV from Maridesulfovibrio salexigens (strain ATCC 14822 / DSM 2638 / NCIMB 8403 / VKM B-1763) (Desulfovibrio salexigens).